The chain runs to 332 residues: 5,10-methylenetetrahydromethanopterin reductase (332 aa).

The protein belongs to the mer family.

The protein localises to the cytoplasm. It catalyses the reaction 5-methyl-5,6,7,8-tetrahydromethanopterin + oxidized coenzyme F420-(gamma-L-Glu)(n) + H(+) = 5,10-methylenetetrahydromethanopterin + reduced coenzyme F420-(gamma-L-Glu)(n). Its pathway is metabolic intermediate metabolism; lactate oxidation. Catalyzes the oxidation of methyl-H(4)MPT to methylene-H(4)MPT. The polypeptide is 5,10-methylenetetrahydromethanopterin reductase (Archaeoglobus fulgidus (strain ATCC 49558 / DSM 4304 / JCM 9628 / NBRC 100126 / VC-16)).